Consider the following 377-residue polypeptide: MSLVRLAHELPIEAPRTAWLDSIIKGDCVSALERLPDHSVDVIFADPPYNLQLGGDLHRPDQSMVSAVDDHWDQFESFQAYDAFTRAWLLACRRVLKPNGTIWVIGSYHNIFRVGTQLQDLGFWLLNDIVWRKTNPMPNFRGRRFQNAHETLIWASREQKGKGYTFNYEAMKAANDDVQMRSDWLFPICTGSERLKDENGDKVHPTQKPEALLARIMMASSKPGDVILDPFFGSGTTGAVAKRLGRHFVGIEREQPYIDAATARINAVEPLGKAELTVMTGKRAEPRVAFTSVMEAGLLRPGTVLCDERRRFAAIVRADGTLTANGEAGSIHRIGARVQGFDACNGWTFWHFEENGVLKPIDALRKIIREQMAAAGA.

Residues 271–373 (LGKAELTVMT…LRKIIREQMA (103 aa)) form the RAMA domain.

It belongs to the N(4)/N(6)-methyltransferase family.

The catalysed reaction is a 2'-deoxyadenosine in DNA + S-adenosyl-L-methionine = an N(6)-methyl-2'-deoxyadenosine in DNA + S-adenosyl-L-homocysteine + H(+). In terms of biological role, a beta subtype methylase that recognizes the double-stranded sequence 5'-GANTC-3' and methylates on A-2 on both strands. Overexpression from a moderate-copy number plasmid (10-12 copies/cell) leads to enlarged, branched cells, many with 3-5 genome equivalents. Contributes to the accurate cell-cycle control of DNA replication and cellular morphology. The polypeptide is DNA methyltransferase CcrM (Brucella abortus (strain 2308)).